Reading from the N-terminus, the 245-residue chain is Probable septum site-determining protein MinC (245 aa).

Residues alanine 112 to proline 132 are compositionally biased toward basic and acidic residues. The tract at residues alanine 112 to arginine 140 is disordered.

It belongs to the MinC family. In terms of assembly, interacts with MinD and FtsZ.

Its function is as follows. Cell division inhibitor that blocks the formation of polar Z ring septums. Rapidly oscillates between the poles of the cell to destabilize FtsZ filaments that have formed before they mature into polar Z rings. Prevents FtsZ polymerization. This is Probable septum site-determining protein MinC from Pseudomonas fluorescens (strain Pf0-1).